We begin with the raw amino-acid sequence, 341 residues long: Flap endonuclease 1 (341 aa).

The interval Met-1–Arg-98 is N-domain. Positions 27, 80, 152, 154, 173, 175, and 236 each coordinate Mg(2+). The tract at residues Glu-116–Lys-258 is I-domain. The interval Lys-330–Phe-338 is interaction with PCNA.

The protein belongs to the XPG/RAD2 endonuclease family. FEN1 subfamily. In terms of assembly, interacts with PCNA. PCNA stimulates the nuclease activity without altering cleavage specificity. Requires Mg(2+) as cofactor.

Functionally, structure-specific nuclease with 5'-flap endonuclease and 5'-3' exonuclease activities involved in DNA replication and repair. During DNA replication, cleaves the 5'-overhanging flap structure that is generated by displacement synthesis when DNA polymerase encounters the 5'-end of a downstream Okazaki fragment. Binds the unpaired 3'-DNA end and kinks the DNA to facilitate 5' cleavage specificity. Cleaves one nucleotide into the double-stranded DNA from the junction in flap DNA, leaving a nick for ligation. Also involved in the base excision repair (BER) pathway. Acts as a genome stabilization factor that prevents flaps from equilibrating into structures that lead to duplications and deletions. Also possesses 5'-3' exonuclease activity on nicked or gapped double-stranded DNA. The sequence is that of Flap endonuclease 1 from Thermococcus onnurineus (strain NA1).